The following is a 275-amino-acid chain: N-acetyltransferase YodP (275 aa).

The N-acetyltransferase domain maps to 125–271; sequence FTMRKAETND…AEGLENMNIW (147 aa).

The protein belongs to the acetyltransferase family.

It catalyses the reaction (3S)-3,6-diaminohexanoate + acetyl-CoA = (3S)-6-acetamido-3-aminohexanoate + CoA + H(+). In vitro, is able to catalyze the acetylation of beta-lysine to N6-acetyl-beta-lysine, an archaeal osmolyte produced by methanogenic archaea. Its physiological function has not yet been elucidated. This chain is N-acetyltransferase YodP (yodP), found in Bacillus subtilis (strain 168).